A 227-amino-acid polypeptide reads, in one-letter code: TMF-regulated nuclear protein 1 (227 aa).

Disordered stretches follow at residues 1-72 and 200-227; these read MPGC…ELQR and GRLR…SPQR. Residues 22–55 are compositionally biased toward pro residues; that stretch reads SPPPPWDPMPSSQPPPPTPTLTPTPTPGQSPPLP.

As to quaternary structure, interacts with TMF1; may regulate TRNP1 proteasomal degradation. Ubiquitinated, leading to its degradation by the proteasome.

It is found in the nucleus. In terms of biological role, DNA-binding factor that regulates the expression of a subset of genes and plays a key role in tangential, radial, and lateral expansion of the brain neocortex. Regulates neural stem cells proliferation and the production of intermediate neural progenitors and basal radial glial cells affecting the process of cerebral cortex gyrification. May control the proliferation rate of cells by regulating their progression through key cell-cycle transition points. The polypeptide is TMF-regulated nuclear protein 1 (TRNP1) (Homo sapiens (Human)).